The chain runs to 364 residues: GDSL esterase/lipase At1g29660 (364 aa).

Positions 1-26 are cleaved as a signal peptide; that stretch reads MESYLRKWCLVSVWVLLLGLGFKVKA. The active-site Nucleophile is the S39. Residues D328 and H331 each act as charge relay system in the active site.

It belongs to the 'GDSL' lipolytic enzyme family. In terms of tissue distribution, found in phloem exudates.

The protein resides in the secreted. Its subcellular location is the extracellular space. It localises to the apoplast. Its function is as follows. Involved in EDS1-dependent systemic acquired resistance, maybe in phloem-mediated long-distance signaling. The sequence is that of GDSL esterase/lipase At1g29660 from Arabidopsis thaliana (Mouse-ear cress).